A 756-amino-acid chain; its full sequence is 5-methyltetrahydropteroyltriglutamate--homocysteine methyltransferase (756 aa).

5-methyltetrahydropteroyltri-L-glutamate contacts are provided by residues 16 to 19 (RELK) and Lys112. Residues 432–434 (IGS) and Glu485 each bind L-homocysteine. L-methionine-binding positions include 432 to 434 (IGS) and Glu485. 5-methyltetrahydropteroyltri-L-glutamate is bound by residues 516-517 (RC) and Trp562. Asp600 lines the L-homocysteine pocket. Residue Asp600 coordinates L-methionine. Position 606 (Glu606) interacts with 5-methyltetrahydropteroyltri-L-glutamate. Zn(2+) is bound by residues His642, Cys644, and Glu666. His695 functions as the Proton donor in the catalytic mechanism. Cys727 is a binding site for Zn(2+).

This sequence belongs to the vitamin-B12 independent methionine synthase family. The cofactor is Zn(2+).

The enzyme catalyses 5-methyltetrahydropteroyltri-L-glutamate + L-homocysteine = tetrahydropteroyltri-L-glutamate + L-methionine. Its pathway is amino-acid biosynthesis; L-methionine biosynthesis via de novo pathway; L-methionine from L-homocysteine (MetE route): step 1/1. Functionally, catalyzes the transfer of a methyl group from 5-methyltetrahydrofolate to homocysteine resulting in methionine formation. In Haemophilus influenzae (strain PittEE), this protein is 5-methyltetrahydropteroyltriglutamate--homocysteine methyltransferase.